Here is a 444-residue protein sequence, read N- to C-terminus: MDALQESPPSHHSLPSALPSATGGNGTVATMHNPFERPLEGIAPWNFTMLAALMGTITALSLGENFAVIVVTARFRQLRQPLNYVLVNLAAADLLVSAIGGSVSFFTNIKGYFFLGVHACVLEGFAVTYFGVVALWSLALLAFERYFVICRPLGNFRLQSKHAVLGLAVVWVFSLACTLPPVLGWSSYRPSMIGTTCEPNWYSGELHDHTFILMFFSTCFIFPLAVIFFSYGKLIQKLKKASETQRGLESTRRAEQQVTRMVVVMILAFLVCWMPYATFSIVVTACPTIHLDPLLAAVPAFFSKTATVYNPVIYIFMNKQFRDCFVQVLPCKGLKKVSATQTAGAQDTEHTASVNTQSPGNRHNIALAAGSLRFTGAVAPSPATGVVEPTMSAAGSMGAPPNKSTAPCQQQGQQQQQQGTPIPAITHVQPLLTHSESVSKICPV.

The segment at 1-20 (MDALQESPPSHHSLPSALPS) is disordered. The Extracellular segment spans residues 1–46 (MDALQESPPSHHSLPSALPSATGGNGTVATMHNPFERPLEGIAPWN). Over residues 7-20 (SPPSHHSLPSALPS) the composition is skewed to low complexity. The N-linked (GlcNAc...) asparagine glycan is linked to asparagine 25. A helical membrane pass occupies residues 47–71 (FTMLAALMGTITALSLGENFAVIVV). The Cytoplasmic segment spans residues 72 to 83 (TARFRQLRQPLN). The chain crosses the membrane as a helical span at residues 84-108 (YVLVNLAAADLLVSAIGGSVSFFTN). Topologically, residues 109–123 (IKGYFFLGVHACVLE) are extracellular. Residues cysteine 120 and cysteine 197 are joined by a disulfide bond. The chain crosses the membrane as a helical span at residues 124–143 (GFAVTYFGVVALWSLALLAF). Residues 144–162 (ERYFVICRPLGNFRLQSKH) are Cytoplasmic-facing. The helical transmembrane segment at 163 to 186 (AVLGLAVVWVFSLACTLPPVLGWS) threads the bilayer. The Extracellular portion of the chain corresponds to 187–210 (SYRPSMIGTTCEPNWYSGELHDHT). A helical membrane pass occupies residues 211-238 (FILMFFSTCFIFPLAVIFFSYGKLIQKL). The Cytoplasmic portion of the chain corresponds to 239–260 (KKASETQRGLESTRRAEQQVTR). A helical membrane pass occupies residues 261–284 (MVVVMILAFLVCWMPYATFSIVVT). At 285-292 (ACPTIHLD) the chain is on the extracellular side. The chain crosses the membrane as a helical span at residues 293 to 317 (PLLAAVPAFFSKTATVYNPVIYIFM). Lysine 304 is modified (N6-(retinylidene)lysine). The Cytoplasmic segment spans residues 318–444 (NKQFRDCFVQ…SESVSKICPV (127 aa)). Cysteine 331 carries the S-palmitoyl cysteine lipid modification. Disordered regions lie at residues 341-360 (QTAG…QSPG) and 388-420 (EPTM…QQGT). Residues 409 to 419 (QQQGQQQQQQG) are compositionally biased toward low complexity.

The protein belongs to the G-protein coupled receptor 1 family. Opsin subfamily. Phosphorylated on some or all of the serine and threonine residues present in the C-terminal region. Pineal gland.

Its subcellular location is the membrane. This chain is Pineal opsin, found in Petromyzon marinus (Sea lamprey).